A 206-amino-acid chain; its full sequence is Protein-methionine-sulfoxide reductase heme-binding subunit MsrQ (206 aa).

Transmembrane regions (helical) follow at residues 8 to 28 (IVWL…WLVW), 82 to 102 (LWCF…ELGI), 116 to 136 (PYLT…LTST), and 153 to 173 (FVYL…KILS).

Belongs to the MsrQ family. Heterodimer of a catalytic subunit (MsrP) and a heme-binding subunit (MsrQ). FMN is required as a cofactor. Requires heme b as cofactor.

The protein resides in the cell inner membrane. In terms of biological role, part of the MsrPQ system that repairs oxidized periplasmic proteins containing methionine sulfoxide residues (Met-O), using respiratory chain electrons. Thus protects these proteins from oxidative-stress damage caused by reactive species of oxygen and chlorine generated by the host defense mechanisms. MsrPQ is essential for the maintenance of envelope integrity under bleach stress, rescuing a wide series of structurally unrelated periplasmic proteins from methionine oxidation. MsrQ provides electrons for reduction to the reductase catalytic subunit MsrP, using the quinone pool of the respiratory chain. The polypeptide is Protein-methionine-sulfoxide reductase heme-binding subunit MsrQ (Citrobacter koseri (strain ATCC BAA-895 / CDC 4225-83 / SGSC4696)).